The primary structure comprises 89 residues: Small ribosomal subunit protein uS15 (89 aa).

The protein belongs to the universal ribosomal protein uS15 family. As to quaternary structure, part of the 30S ribosomal subunit. Forms a bridge to the 50S subunit in the 70S ribosome, contacting the 23S rRNA.

Functionally, one of the primary rRNA binding proteins, it binds directly to 16S rRNA where it helps nucleate assembly of the platform of the 30S subunit by binding and bridging several RNA helices of the 16S rRNA. Forms an intersubunit bridge (bridge B4) with the 23S rRNA of the 50S subunit in the ribosome. The polypeptide is Small ribosomal subunit protein uS15 (Elusimicrobium minutum (strain Pei191)).